We begin with the raw amino-acid sequence, 249 residues long: Uridylate kinase (249 aa).

13–16 (KLSG) is a binding site for ATP. Glycine 55 contacts UMP. Positions 56 and 60 each coordinate ATP. UMP is bound by residues aspartate 75 and 136 to 143 (IGNPFFTT). Threonine 163, phenylalanine 169, and aspartate 172 together coordinate ATP.

Belongs to the UMP kinase family. Homohexamer.

The protein localises to the cytoplasm. The enzyme catalyses UMP + ATP = UDP + ADP. Its pathway is pyrimidine metabolism; CTP biosynthesis via de novo pathway; UDP from UMP (UMPK route): step 1/1. Inhibited by UTP. Catalyzes the reversible phosphorylation of UMP to UDP. The sequence is that of Uridylate kinase from Baumannia cicadellinicola subsp. Homalodisca coagulata.